Reading from the N-terminus, the 500-residue chain is Protein nucleotidyltransferase YdiU (500 aa).

ATP-binding residues include Gly96, Gly98, Arg99, Lys119, Asp131, Gly132, Arg182, and Arg189. The Proton acceptor role is filled by Asp258. Residues Asn259 and Asp268 each contribute to the Mg(2+) site. Asp268 contacts ATP.

This sequence belongs to the SELO family. Mg(2+) serves as cofactor. Requires Mn(2+) as cofactor.

It carries out the reaction L-seryl-[protein] + ATP = 3-O-(5'-adenylyl)-L-seryl-[protein] + diphosphate. It catalyses the reaction L-threonyl-[protein] + ATP = 3-O-(5'-adenylyl)-L-threonyl-[protein] + diphosphate. The enzyme catalyses L-tyrosyl-[protein] + ATP = O-(5'-adenylyl)-L-tyrosyl-[protein] + diphosphate. The catalysed reaction is L-histidyl-[protein] + UTP = N(tele)-(5'-uridylyl)-L-histidyl-[protein] + diphosphate. It carries out the reaction L-seryl-[protein] + UTP = O-(5'-uridylyl)-L-seryl-[protein] + diphosphate. It catalyses the reaction L-tyrosyl-[protein] + UTP = O-(5'-uridylyl)-L-tyrosyl-[protein] + diphosphate. In terms of biological role, nucleotidyltransferase involved in the post-translational modification of proteins. It can catalyze the addition of adenosine monophosphate (AMP) or uridine monophosphate (UMP) to a protein, resulting in modifications known as AMPylation and UMPylation. In Rhizobium leguminosarum bv. trifolii (strain WSM2304), this protein is Protein nucleotidyltransferase YdiU.